Consider the following 136-residue polypeptide: NLP effector protein 13 (136 aa).

Residues 1 to 9 (MYSWYFPKD) carry the Conserved undecapeptide motif I motif. The short motif at 16–22 (GHRHDWE) is the Hepta-peptide GHRHDWE motif II element.

Belongs to the Necrosis inducing protein (NPP1) family.

The protein resides in the secreted. Secreted effector that contributes moderately to virulence during infection by P.capsici. Causes only small yellow areas at 3 days after inoculation of host C.annuum leaves; these areas expand somewhat and became necrotic at 7 days after inoculation. Leads only to chlorotic areas, without necrosis at 7 days after non-host N.benthamiana leaves infection. In Phytophthora capsici, this protein is NLP effector protein 13.